We begin with the raw amino-acid sequence, 415 residues long: Serine--tRNA ligase (415 aa).

231–233 is a binding site for L-serine; sequence TAE. 262 to 264 contacts ATP; that stretch reads RSE. An L-serine-binding site is contributed by Glu285. 349–352 provides a ligand contact to ATP; sequence EISS. Ser383 is an L-serine binding site.

The protein belongs to the class-II aminoacyl-tRNA synthetase family. Type-1 seryl-tRNA synthetase subfamily. As to quaternary structure, homodimer. The tRNA molecule binds across the dimer.

The protein localises to the cytoplasm. It carries out the reaction tRNA(Ser) + L-serine + ATP = L-seryl-tRNA(Ser) + AMP + diphosphate + H(+). It catalyses the reaction tRNA(Sec) + L-serine + ATP = L-seryl-tRNA(Sec) + AMP + diphosphate + H(+). It functions in the pathway aminoacyl-tRNA biosynthesis; selenocysteinyl-tRNA(Sec) biosynthesis; L-seryl-tRNA(Sec) from L-serine and tRNA(Sec): step 1/1. Functionally, catalyzes the attachment of serine to tRNA(Ser). Is also able to aminoacylate tRNA(Sec) with serine, to form the misacylated tRNA L-seryl-tRNA(Sec), which will be further converted into selenocysteinyl-tRNA(Sec). In Helicobacter acinonychis (strain Sheeba), this protein is Serine--tRNA ligase.